The chain runs to 337 residues: DNA-directed RNA polymerase subunit alpha (337 aa).

An alpha N-terminal domain (alpha-NTD) region spans residues 1–233; it reads MVREKVRVST…DLFIPFLHAE (233 aa). The tract at residues 267–337 is alpha C-terminal domain (alpha-CTD); that stretch reads IALKSIFIDQ…KAFHNPFTEE (71 aa).

The protein belongs to the RNA polymerase alpha chain family. In plastids the minimal PEP RNA polymerase catalytic core is composed of four subunits: alpha, beta, beta', and beta''. When a (nuclear-encoded) sigma factor is associated with the core the holoenzyme is formed, which can initiate transcription.

Its subcellular location is the plastid. The protein resides in the chloroplast. It carries out the reaction RNA(n) + a ribonucleoside 5'-triphosphate = RNA(n+1) + diphosphate. Functionally, DNA-dependent RNA polymerase catalyzes the transcription of DNA into RNA using the four ribonucleoside triphosphates as substrates. The protein is DNA-directed RNA polymerase subunit alpha of Eucalyptus globulus subsp. globulus (Tasmanian blue gum).